The sequence spans 330 residues: G-protein coupled receptor 157 (330 aa).

The Extracellular portion of the chain corresponds to 1-15 (MPTPAPPTELLPWER). The helical transmembrane segment at 16-36 (AVVLLSCVLSALGSGLLVATH) threads the bilayer. Residues 37–48 (ALWPDLRSRARR) are Cytoplasmic-facing. Residues 49 to 69 (LLLFLSLADLLSAASYFYGVL) form a helical membrane-spanning segment. At 70-87 (QDFAGTSWDCVLQGALST) the chain is on the extracellular side. A helical membrane pass occupies residues 88-108 (FANTSSFFWTVAIALYLYLNI). Residues 109 to 119 (VRATRGPCTDH) are Cytoplasmic-facing. The chain crosses the membrane as a helical span at residues 120 to 140 (LVWAFHLISWGVPLAITVAAV). Over 141 to 166 (CLKKIGYDASDVSVGWCWINLEAEDR) the chain is Extracellular. The helical transmembrane segment at 167-187 (VLWMLLTGKLWEMLAYILLPL) threads the bilayer. The Cytoplasmic portion of the chain corresponds to 188–227 (LYLLVRKHINRAHQALSEYRPIWEGRQLQRGSPTSMADKK). Residues 228–250 (LILIPFIFICLRVWSTVRFVLTL) traverse the membrane as a helical segment. Residues 251-259 (CGSPVVQAP) lie on the Extracellular side of the membrane. Residues 260–282 (VLVVLHGIGNTFQGGANCIMFVL) traverse the membrane as a helical segment. The Cytoplasmic segment spans residues 283-330 (CTRAVRTRLFSLCCCYPRPPTQNPPGASIPPKMGESQESRRTPEVPST). A disordered region spans residues 303 to 330 (TQNPPGASIPPKMGESQESRRTPEVPST). Over residues 317 to 330 (ESQESRRTPEVPST) the composition is skewed to basic and acidic residues.

Belongs to the G-protein coupled receptor 2 family.

It localises to the cell projection. The protein localises to the cilium membrane. Functionally, orphan receptor that promotes neuronal differentiation of radial glial progenitors (RGPs). The activity of this receptor is mediated by a G(q)-protein that activates a phosphatidylinositol-calcium second messenger. This chain is G-protein coupled receptor 157 (Gpr157), found in Rattus norvegicus (Rat).